The following is a 119-amino-acid chain: Na(+)/H(+) antiporter subunit G (119 aa).

A run of 3 helical transmembrane segments spans residues 7 to 29 (IISI…IIRF), 44 to 61 (TLGV…FFLV), and 66 to 88 (VGKL…MMMG).

It belongs to the CPA3 antiporters (TC 2.A.63) subunit G family. As to quaternary structure, forms a heterooligomeric complex that consists of seven subunits: MrpA, MrpB, MrpC, MrpD, MrpE, MrpF and MrpG.

The protein localises to the cell membrane. Its function is as follows. Mnh complex is a Na(+)Li(+)/H(+) antiporter involved in Na(+) and/or Li(+) excretion and Na(+) resistance. Na(+)/H(+) antiport consumes a transmembrane electrical potential, and is thus inferred to be electrogenic. Does not transport K(+), Ca(2+) or Mg(2+). This chain is Na(+)/H(+) antiporter subunit G (mrpG), found in Alkalihalophilus pseudofirmus (strain ATCC BAA-2126 / JCM 17055 / OF4) (Bacillus pseudofirmus).